Reading from the N-terminus, the 157-residue chain is 6,7-dimethyl-8-ribityllumazine synthase (157 aa).

Residues F22, 56 to 58 (AFE), and 81 to 83 (VLI) each bind 5-amino-6-(D-ribitylamino)uracil. 86 to 87 (ET) lines the (2S)-2-hydroxy-3-oxobutyl phosphate pocket. H89 acts as the Proton donor in catalysis. F114 serves as a coordination point for 5-amino-6-(D-ribitylamino)uracil. R128 contacts (2S)-2-hydroxy-3-oxobutyl phosphate.

This sequence belongs to the DMRL synthase family.

It carries out the reaction (2S)-2-hydroxy-3-oxobutyl phosphate + 5-amino-6-(D-ribitylamino)uracil = 6,7-dimethyl-8-(1-D-ribityl)lumazine + phosphate + 2 H2O + H(+). Its pathway is cofactor biosynthesis; riboflavin biosynthesis; riboflavin from 2-hydroxy-3-oxobutyl phosphate and 5-amino-6-(D-ribitylamino)uracil: step 1/2. Functionally, catalyzes the formation of 6,7-dimethyl-8-ribityllumazine by condensation of 5-amino-6-(D-ribitylamino)uracil with 3,4-dihydroxy-2-butanone 4-phosphate. This is the penultimate step in the biosynthesis of riboflavin. This is 6,7-dimethyl-8-ribityllumazine synthase from Chlamydia trachomatis serovar L2 (strain ATCC VR-902B / DSM 19102 / 434/Bu).